The chain runs to 93 residues: Acylphosphatase (93 aa).

The 88-residue stretch at 6–93 (RAIVTVKGLV…GEFDTFDVRY (88 aa)) folds into the Acylphosphatase-like domain. Catalysis depends on residues Arg-21 and Asn-39.

The protein belongs to the acylphosphatase family.

It catalyses the reaction an acyl phosphate + H2O = a carboxylate + phosphate + H(+). This is Acylphosphatase (acyP) from Geobacter metallireducens (strain ATCC 53774 / DSM 7210 / GS-15).